A 348-amino-acid chain; its full sequence is Dihydroorotase (348 aa).

Positions 17 and 19 each coordinate Zn(2+). Residues 19-21 and Asn45 contribute to the substrate site; that span reads HLR. Positions 103, 140, and 178 each coordinate Zn(2+). Lys103 is modified (N6-carboxylysine). Residue His140 coordinates substrate. Leu223 serves as a coordination point for substrate. Asp251 contributes to the Zn(2+) binding site. Residue Asp251 is part of the active site. Substrate is bound by residues His255 and Ala267.

It belongs to the metallo-dependent hydrolases superfamily. DHOase family. Class II DHOase subfamily. As to quaternary structure, homodimer. It depends on Zn(2+) as a cofactor.

The catalysed reaction is (S)-dihydroorotate + H2O = N-carbamoyl-L-aspartate + H(+). The protein operates within pyrimidine metabolism; UMP biosynthesis via de novo pathway; (S)-dihydroorotate from bicarbonate: step 3/3. In terms of biological role, catalyzes the reversible cyclization of carbamoyl aspartate to dihydroorotate. The protein is Dihydroorotase of Escherichia fergusonii (strain ATCC 35469 / DSM 13698 / CCUG 18766 / IAM 14443 / JCM 21226 / LMG 7866 / NBRC 102419 / NCTC 12128 / CDC 0568-73).